We begin with the raw amino-acid sequence, 888 residues long: Leucine--tRNA ligase (888 aa).

Residues 42 to 52 (PYPSGKLHMGH) carry the 'HIGH' region motif. Positions 640–644 (TMSKS) match the 'KMSKS' region motif. ATP is bound at residue lysine 643.

It belongs to the class-I aminoacyl-tRNA synthetase family.

The protein localises to the cytoplasm. The enzyme catalyses tRNA(Leu) + L-leucine + ATP = L-leucyl-tRNA(Leu) + AMP + diphosphate. The chain is Leucine--tRNA ligase from Polaromonas naphthalenivorans (strain CJ2).